The sequence spans 261 residues: MTHQTHAYHMVNPSPWPLTGALSALLMTSGLIMWFHFNSTALLMLGLTTNMLTMYQWWRDIVRESTFQGHHTPTVQKGLRYGMILFIISEVLFFTGFFWAFYHSSLAPTPELGGCWPPTGIHPLNPLEVPLLNTSVLLASGVSITWAHHSLMEGNRNHMLQALFITIALGVYFTLLQASEYYEAPFTISDGVYGSTFFVATGFHGLHVIIGSTFLIVCFFRQLKFHFTSNHHFGFEAAAWYWHFVDVVWLFLYVSIYWWGS.

At 1–15 (MTHQTHAYHMVNPSP) the chain is on the mitochondrial matrix side. A helical transmembrane segment spans residues 16 to 34 (WPLTGALSALLMTSGLIMW). Residues 35–40 (FHFNST) are Mitochondrial intermembrane-facing. Residues 41–66 (ALLMLGLTTNMLTMYQWWRDIVREST) form a helical membrane-spanning segment. Residues 67–72 (FQGHHT) are Mitochondrial matrix-facing. A helical membrane pass occupies residues 73-105 (PTVQKGLRYGMILFIISEVLFFTGFFWAFYHSS). Over 106–128 (LAPTPELGGCWPPTGIHPLNPLE) the chain is Mitochondrial intermembrane. Residues 129-152 (VPLLNTSVLLASGVSITWAHHSLM) form a helical membrane-spanning segment. Residues 153–155 (EGN) are Mitochondrial matrix-facing. Residues 156 to 183 (RNHMLQALFITIALGVYFTLLQASEYYE) traverse the membrane as a helical segment. Residues 184 to 190 (APFTISD) lie on the Mitochondrial intermembrane side of the membrane. A helical transmembrane segment spans residues 191–223 (GVYGSTFFVATGFHGLHVIIGSTFLIVCFFRQL). Residues 224-232 (KFHFTSNHH) lie on the Mitochondrial matrix side of the membrane. A helical transmembrane segment spans residues 233–256 (FGFEAAAWYWHFVDVVWLFLYVSI). Over 257-261 (YWWGS) the chain is Mitochondrial intermembrane.

This sequence belongs to the cytochrome c oxidase subunit 3 family. As to quaternary structure, component of the cytochrome c oxidase (complex IV, CIV), a multisubunit enzyme composed of 14 subunits. The complex is composed of a catalytic core of 3 subunits MT-CO1, MT-CO2 and MT-CO3, encoded in the mitochondrial DNA, and 11 supernumerary subunits COX4I, COX5A, COX5B, COX6A, COX6B, COX6C, COX7A, COX7B, COX7C, COX8 and NDUFA4, which are encoded in the nuclear genome. The complex exists as a monomer or a dimer and forms supercomplexes (SCs) in the inner mitochondrial membrane with NADH-ubiquinone oxidoreductase (complex I, CI) and ubiquinol-cytochrome c oxidoreductase (cytochrome b-c1 complex, complex III, CIII), resulting in different assemblies (supercomplex SCI(1)III(2)IV(1) and megacomplex MCI(2)III(2)IV(2)).

It is found in the mitochondrion inner membrane. It catalyses the reaction 4 Fe(II)-[cytochrome c] + O2 + 8 H(+)(in) = 4 Fe(III)-[cytochrome c] + 2 H2O + 4 H(+)(out). Functionally, component of the cytochrome c oxidase, the last enzyme in the mitochondrial electron transport chain which drives oxidative phosphorylation. The respiratory chain contains 3 multisubunit complexes succinate dehydrogenase (complex II, CII), ubiquinol-cytochrome c oxidoreductase (cytochrome b-c1 complex, complex III, CIII) and cytochrome c oxidase (complex IV, CIV), that cooperate to transfer electrons derived from NADH and succinate to molecular oxygen, creating an electrochemical gradient over the inner membrane that drives transmembrane transport and the ATP synthase. Cytochrome c oxidase is the component of the respiratory chain that catalyzes the reduction of oxygen to water. Electrons originating from reduced cytochrome c in the intermembrane space (IMS) are transferred via the dinuclear copper A center (CU(A)) of subunit 2 and heme A of subunit 1 to the active site in subunit 1, a binuclear center (BNC) formed by heme A3 and copper B (CU(B)). The BNC reduces molecular oxygen to 2 water molecules using 4 electrons from cytochrome c in the IMS and 4 protons from the mitochondrial matrix. This is Cytochrome c oxidase subunit 3 (MT-CO3) from Cephalophorus natalensis (Natal red duiker).